The following is a 199-amino-acid chain: Probable septum site-determining protein MinC (199 aa).

The protein belongs to the MinC family. As to quaternary structure, interacts with MinD and FtsZ.

Its function is as follows. Cell division inhibitor that blocks the formation of polar Z ring septums. Rapidly oscillates between the poles of the cell to destabilize FtsZ filaments that have formed before they mature into polar Z rings. Prevents FtsZ polymerization. The sequence is that of Probable septum site-determining protein MinC from Persephonella marina (strain DSM 14350 / EX-H1).